We begin with the raw amino-acid sequence, 964 residues long: Lon protease homolog, mitochondrial (964 aa).

In terms of domain architecture, Lon N-terminal spans 89–300 (VIALPLPHRP…LTLELVKKEM (212 aa)). Residue 455–462 (GPPGVGKT) participates in ATP binding. Residues 663–740 (GVSNEPDHES…TSKGNKGTDG (78 aa)) are disordered. Positions 673–687 (VSASVTEESGNGDNT) are enriched in polar residues. A compositionally biased stretch (basic and acidic residues) spans 688–698 (TTKDEILKDPA). The span at 703–712 (SVTNNVTNPA) shows a compositional bias: polar residues. Positions 773–957 (HTPVGVVMGL…SEIYDLAFQS (185 aa)) constitute a Lon proteolytic domain. Catalysis depends on residues serine 863 and lysine 906.

This sequence belongs to the peptidase S16 family. Homoheptamer. Organized in a ring with a central cavity.

It localises to the mitochondrion matrix. The enzyme catalyses Hydrolysis of proteins in presence of ATP.. ATP-dependent serine protease that mediates the selective degradation of misfolded, unassembled or oxidatively damaged polypeptides as well as certain short-lived regulatory proteins in the mitochondrial matrix. May also have a chaperone function in the assembly of inner membrane protein complexes. Participates in the regulation of mitochondrial gene expression and in the maintenance of the integrity of the mitochondrial genome. Binds to mitochondrial DNA in a site-specific manner. This chain is Lon protease homolog, mitochondrial (LON2), found in Zea mays (Maize).